The sequence spans 418 residues: Gamma-glutamyl phosphate reductase (418 aa).

This sequence belongs to the gamma-glutamyl phosphate reductase family.

The protein localises to the cytoplasm. It carries out the reaction L-glutamate 5-semialdehyde + phosphate + NADP(+) = L-glutamyl 5-phosphate + NADPH + H(+). The protein operates within amino-acid biosynthesis; L-proline biosynthesis; L-glutamate 5-semialdehyde from L-glutamate: step 2/2. Functionally, catalyzes the NADPH-dependent reduction of L-glutamate 5-phosphate into L-glutamate 5-semialdehyde and phosphate. The product spontaneously undergoes cyclization to form 1-pyrroline-5-carboxylate. The sequence is that of Gamma-glutamyl phosphate reductase from Dechloromonas aromatica (strain RCB).